The primary structure comprises 73 residues: Translation initiation factor IF-1 (73 aa).

Positions 1–73 (MAKKDGVIEI…TRGRIVYRYK (73 aa)) constitute an S1-like domain.

The protein belongs to the IF-1 family. In terms of assembly, component of the 30S ribosomal translation pre-initiation complex which assembles on the 30S ribosome in the order IF-2 and IF-3, IF-1 and N-formylmethionyl-tRNA(fMet); mRNA recruitment can occur at any time during PIC assembly.

The protein localises to the cytoplasm. In terms of biological role, one of the essential components for the initiation of protein synthesis. Stabilizes the binding of IF-2 and IF-3 on the 30S subunit to which N-formylmethionyl-tRNA(fMet) subsequently binds. Helps modulate mRNA selection, yielding the 30S pre-initiation complex (PIC). Upon addition of the 50S ribosomal subunit IF-1, IF-2 and IF-3 are released leaving the mature 70S translation initiation complex. This is Translation initiation factor IF-1 from Arthrobacter sp. (strain FB24).